The following is a 304-amino-acid chain: DnaJ homolog subfamily C member 17 (304 aa).

The region spanning 11-76 is the J domain; the sequence is DLYALLGIEE…AARAAYDKVR (66 aa). Basic and acidic residues predominate over residues 79–106; it reads KKQAAERTQKLDEKRKKVKLDLEARERQ. Residues 79-145 are disordered; it reads KKQAAERTQK…SRQLEEQQRL (67 aa). At Ser-112 the chain carries Phosphoserine. Basic and acidic residues predominate over residues 118 to 145; that stretch reads SRSTRTLEQEIERLREEGSRQLEEQQRL. The RRM domain maps to 178-249; the sequence is KCKKEDESKG…NPLKISWLEG (72 aa). Lys-264 carries the post-translational modification N6-methyllysine.

The protein resides in the cytoplasm. Its subcellular location is the nucleus. In terms of biological role, may negatively affect PAX8-induced thyroglobulin/TG transcription. The protein is DnaJ homolog subfamily C member 17 (DNAJC17) of Homo sapiens (Human).